The sequence spans 445 residues: tRNA-2-methylthio-N(6)-dimethylallyladenosine synthase (445 aa).

An MTTase N-terminal domain is found at K7 to S121. [4Fe-4S] cluster contacts are provided by C16, C52, C84, C156, C160, and C163. The Radical SAM core domain occupies R142–D374. In terms of domain architecture, TRAM spans Q377–D438.

It belongs to the methylthiotransferase family. MiaB subfamily. In terms of assembly, monomer. The cofactor is [4Fe-4S] cluster.

It is found in the cytoplasm. The enzyme catalyses N(6)-dimethylallyladenosine(37) in tRNA + (sulfur carrier)-SH + AH2 + 2 S-adenosyl-L-methionine = 2-methylsulfanyl-N(6)-dimethylallyladenosine(37) in tRNA + (sulfur carrier)-H + 5'-deoxyadenosine + L-methionine + A + S-adenosyl-L-homocysteine + 2 H(+). Its function is as follows. Catalyzes the methylthiolation of N6-(dimethylallyl)adenosine (i(6)A), leading to the formation of 2-methylthio-N6-(dimethylallyl)adenosine (ms(2)i(6)A) at position 37 in tRNAs that read codons beginning with uridine. This Zymomonas mobilis subsp. mobilis (strain ATCC 31821 / ZM4 / CP4) protein is tRNA-2-methylthio-N(6)-dimethylallyladenosine synthase.